A 332-amino-acid polypeptide reads, in one-letter code: Glycerol-3-phosphate dehydrogenase [NAD(P)+] (332 aa).

NADPH contacts are provided by serine 15, tryptophan 16, and lysine 110. Sn-glycerol 3-phosphate contacts are provided by lysine 110, glycine 137, and serine 139. NADPH is bound at residue alanine 141. 5 residues coordinate sn-glycerol 3-phosphate: lysine 192, aspartate 245, serine 255, arginine 256, and asparagine 257. Lysine 192 functions as the Proton acceptor in the catalytic mechanism. Arginine 256 serves as a coordination point for NADPH. Glutamate 282 provides a ligand contact to NADPH.

This sequence belongs to the NAD-dependent glycerol-3-phosphate dehydrogenase family.

It localises to the cytoplasm. It catalyses the reaction sn-glycerol 3-phosphate + NAD(+) = dihydroxyacetone phosphate + NADH + H(+). The enzyme catalyses sn-glycerol 3-phosphate + NADP(+) = dihydroxyacetone phosphate + NADPH + H(+). It participates in membrane lipid metabolism; glycerophospholipid metabolism. Functionally, catalyzes the reduction of the glycolytic intermediate dihydroxyacetone phosphate (DHAP) to sn-glycerol 3-phosphate (G3P), the key precursor for phospholipid synthesis. The protein is Glycerol-3-phosphate dehydrogenase [NAD(P)+] of Coxiella burnetii (strain RSA 331 / Henzerling II).